The sequence spans 491 residues: Glutamate--tRNA ligase (491 aa).

Residues proline 13–asparagine 23 carry the 'HIGH' region motif. Positions 110, 112, 137, and 139 each coordinate Zn(2+). The short motif at lysine 254–arginine 258 is the 'KMSKS' region element. Lysine 257 provides a ligand contact to ATP.

It belongs to the class-I aminoacyl-tRNA synthetase family. Glutamate--tRNA ligase type 1 subfamily. As to quaternary structure, monomer. It depends on Zn(2+) as a cofactor.

The protein resides in the cytoplasm. It catalyses the reaction tRNA(Glu) + L-glutamate + ATP = L-glutamyl-tRNA(Glu) + AMP + diphosphate. Catalyzes the attachment of glutamate to tRNA(Glu) in a two-step reaction: glutamate is first activated by ATP to form Glu-AMP and then transferred to the acceptor end of tRNA(Glu). The sequence is that of Glutamate--tRNA ligase from Listeria welshimeri serovar 6b (strain ATCC 35897 / DSM 20650 / CCUG 15529 / CIP 8149 / NCTC 11857 / SLCC 5334 / V8).